The following is a 203-amino-acid chain: MSRYTGPSWKQSRRLGLSLTGTGKELARRNYVPGQHGPNNRSKLSEYGLQLAEKQKLRFSYGLGEKQFRNLFVQATKIKEGTLGFNFMILLERRLDNVVYRLGLATTRRQARQFVNHGHILVDGKRVDIPSYRVEPGQVISVREKSMKVPAILEAVEATLGRPAFVSFDAEKLEGSLTRLPERDEINPEINEALVVEFYNKML.

The S4 RNA-binding domain maps to 93–156; that stretch reads RRLDNVVYRL…MKVPAILEAV (64 aa).

This sequence belongs to the universal ribosomal protein uS4 family. In terms of assembly, part of the 30S ribosomal subunit. Contacts protein S5. The interaction surface between S4 and S5 is involved in control of translational fidelity.

Functionally, one of the primary rRNA binding proteins, it binds directly to 16S rRNA where it nucleates assembly of the body of the 30S subunit. With S5 and S12 plays an important role in translational accuracy. In Streptococcus uberis (strain ATCC BAA-854 / 0140J), this protein is Small ribosomal subunit protein uS4.